The following is a 121-amino-acid chain: MALNIENIIAEIKEATILELNDLVKAIEEEFGVTAAAPVAVAAAGGAAEEAKDSFDVELTSAGDKKVGVIKVVREITGLGLKEAKELVDGAPAMVKEGVATAEAEEIKAKLEEAGASVTLK.

Belongs to the bacterial ribosomal protein bL12 family. In terms of assembly, homodimer. Part of the ribosomal stalk of the 50S ribosomal subunit. Forms a multimeric L10(L12)X complex, where L10 forms an elongated spine to which 2 to 4 L12 dimers bind in a sequential fashion. Binds GTP-bound translation factors.

Forms part of the ribosomal stalk which helps the ribosome interact with GTP-bound translation factors. Is thus essential for accurate translation. This chain is Large ribosomal subunit protein bL12, found in Streptococcus suis (strain 98HAH33).